A 576-amino-acid polypeptide reads, in one-letter code: Glutamine--tRNA ligase (576 aa).

The 'HIGH' region motif lies at P47–H57. ATP contacts are provided by residues E48–N50 and H54–S60. D80 and Y229 together coordinate L-glutamine. Residues T248 and R283 to L284 contribute to the ATP site. The 'KMSKS' region signature appears at I290 to R294.

This sequence belongs to the class-I aminoacyl-tRNA synthetase family. As to quaternary structure, monomer.

The protein localises to the cytoplasm. The catalysed reaction is tRNA(Gln) + L-glutamine + ATP = L-glutaminyl-tRNA(Gln) + AMP + diphosphate. This Ralstonia pickettii (strain 12J) protein is Glutamine--tRNA ligase.